Consider the following 310-residue polypeptide: MAAESLRIATRRSQLAMWQAEHIAAELQRLHPGLEVELVPMSTRGDEILDQPLARIGGKGLFMKELEDGMLRGEADLAVHSMKDIPWRLPEGFDLAAVSDRADPRDAFVSNHYSDLDELPHGARVGTASLRRQCQIMDRRPDLQIEVLRGNVQTRLRKLDDGVYDAIILAASGLDRLELTHRIAGRLTPEQSLPAVGQGALGIECREGDERVMKLVEGLNHEATRIRINAERGMNARLEGSCQVPIGGYAELDGDEVHLRGLVGAIDGSEVIRGEIRGPAAEAENLGRQLGDDLLARGADRILKAVAEQQ.

Cys242 carries the S-(dipyrrolylmethanemethyl)cysteine modification.

The protein belongs to the HMBS family. Monomer. Dipyrromethane is required as a cofactor.

The enzyme catalyses 4 porphobilinogen + H2O = hydroxymethylbilane + 4 NH4(+). It participates in porphyrin-containing compound metabolism; protoporphyrin-IX biosynthesis; coproporphyrinogen-III from 5-aminolevulinate: step 2/4. Tetrapolymerization of the monopyrrole PBG into the hydroxymethylbilane pre-uroporphyrinogen in several discrete steps. In Halorhodospira halophila (strain DSM 244 / SL1) (Ectothiorhodospira halophila (strain DSM 244 / SL1)), this protein is Porphobilinogen deaminase.